A 228-amino-acid polypeptide reads, in one-letter code: UPF0758 protein Gura_4138 (228 aa).

In terms of domain architecture, MPN spans 106–228 (RFTSPSQVFE…FLSFVDRGMM (123 aa)). Zn(2+) is bound by residues H177, H179, and D190. Positions 177 to 190 (HNHPTGDPTPSRED) match the JAMM motif motif.

It belongs to the UPF0758 family.

This is UPF0758 protein Gura_4138 from Geotalea uraniireducens (strain Rf4) (Geobacter uraniireducens).